Here is a 181-residue protein sequence, read N- to C-terminus: Isopentenyl-diphosphate Delta-isomerase (181 aa).

Residues His29 and His36 each coordinate Mn(2+). One can recognise a Nudix hydrolase domain in the interval 34–167; it reads PLHLAFSCYL…GWAISPWAAE (134 aa). Cys71 is an active-site residue. Mn(2+) is bound at residue His73. Position 91 (Glu91) interacts with Mg(2+). Mn(2+) contacts are provided by Glu118 and Glu120. Glu120 is a catalytic residue.

Belongs to the IPP isomerase type 1 family. The cofactor is Mg(2+). Mn(2+) is required as a cofactor.

It localises to the cytoplasm. It carries out the reaction isopentenyl diphosphate = dimethylallyl diphosphate. Its pathway is isoprenoid biosynthesis; dimethylallyl diphosphate biosynthesis; dimethylallyl diphosphate from isopentenyl diphosphate: step 1/1. Catalyzes the 1,3-allylic rearrangement of the homoallylic substrate isopentenyl (IPP) to its highly electrophilic allylic isomer, dimethylallyl diphosphate (DMAPP). The protein is Isopentenyl-diphosphate Delta-isomerase of Mycolicibacterium vanbaalenii (strain DSM 7251 / JCM 13017 / BCRC 16820 / KCTC 9966 / NRRL B-24157 / PYR-1) (Mycobacterium vanbaalenii).